We begin with the raw amino-acid sequence, 427 residues long: Flotillin-1 (427 aa).

3 positions are modified to phosphoserine: Ser19, Ser163, and Ser385. A Phosphothreonine modification is found at Thr387.

Belongs to the band 7/mec-2 family. Flotillin subfamily. In terms of assembly, heterooligomeric complex of flotillin-1 and flotillin-2 and caveolin-1 and caveolin-2. Interacts with ECPAS.

It is found in the cell membrane. It localises to the endosome. Its subcellular location is the membrane. The protein localises to the caveola. The protein resides in the melanosome. It is found in the membrane raft. Its function is as follows. May act as a scaffolding protein within caveolar membranes, functionally participating in formation of caveolae or caveolae-like vesicles. The protein is Flotillin-1 (FLOT1) of Homo sapiens (Human).